A 601-amino-acid polypeptide reads, in one-letter code: Glutathione-regulated potassium-efflux system protein KefB (601 aa).

The next 13 membrane-spanning stretches (helical) occupy residues 4 to 24, 29 to 49, 55 to 75, 87 to 107, 115 to 135, 152 to 172, 177 to 197, 207 to 227, 230 to 250, 268 to 288, 291 to 311, 324 to 344, and 356 to 376; these read SDFL…VPLA, IGAV…GLGF, EILH…GLEL, IFGV…GLLM, AAVV…LQLM, VLLF…LLAG, HFDW…LIGG, FIAA…LVLG, LFMD…GVLL, GLLL…GVLY, LLWV…VLYL, MQFA…FSTA, and ALLL…MKLV. One can recognise an RCK N-terminal domain in the interval 400–519; it reads KPQVIVVGFG…AGVTQFSRET (120 aa).

Belongs to the monovalent cation:proton antiporter 2 (CPA2) transporter (TC 2.A.37) family. KefB subfamily. In terms of assembly, interacts with the regulatory subunit KefG.

Its subcellular location is the cell inner membrane. In terms of biological role, pore-forming subunit of a potassium efflux system that confers protection against electrophiles. Catalyzes K(+)/H(+) antiport. The sequence is that of Glutathione-regulated potassium-efflux system protein KefB from Escherichia coli O81 (strain ED1a).